Consider the following 506-residue polypeptide: Glucan endo-1,3-beta-glucosidase 13 (506 aa).

The first 22 residues, 1–22 (MARDFKLIFSISILLLLLDCCY), serve as a signal peptide directing secretion. Asparagine 70 carries N-linked (GlcNAc...) asparagine glycosylation. The Proton donor role is filled by glutamate 119. 3 N-linked (GlcNAc...) asparagine glycosylation sites follow: asparagine 127, asparagine 175, and asparagine 212. The Nucleophile role is filled by glutamate 264. N-linked (GlcNAc...) asparagine glycans are attached at residues asparagine 356 and asparagine 361. The cysteines at positions 370 and 433 are disulfide-linked. 2 N-linked (GlcNAc...) asparagine glycosylation sites follow: asparagine 459 and asparagine 465. A lipid anchor (GPI-anchor amidated serine) is attached at serine 471. A propeptide spans 472–506 (SASTPRGNELLQWILKLCLMISLFFSLQTMNSQAL) (removed in mature form).

Belongs to the glycosyl hydrolase 17 family. Post-translationally, contains two additional disulfide bonds.

Its subcellular location is the secreted. It localises to the cell wall. The protein localises to the cell membrane. It catalyses the reaction Hydrolysis of (1-&gt;3)-beta-D-glucosidic linkages in (1-&gt;3)-beta-D-glucans.. The chain is Glucan endo-1,3-beta-glucosidase 13 from Arabidopsis thaliana (Mouse-ear cress).